The following is a 607-amino-acid chain: Elongation factor 4 (607 aa).

Positions 11 to 193 (EKIRNFSIIA…QIVEKVPAPQ (183 aa)) constitute a tr-type G domain. Residues 23–28 (DHGKST) and 140–143 (NKID) contribute to the GTP site.

It belongs to the TRAFAC class translation factor GTPase superfamily. Classic translation factor GTPase family. LepA subfamily.

It is found in the cell membrane. The catalysed reaction is GTP + H2O = GDP + phosphate + H(+). Functionally, required for accurate and efficient protein synthesis under certain stress conditions. May act as a fidelity factor of the translation reaction, by catalyzing a one-codon backward translocation of tRNAs on improperly translocated ribosomes. Back-translocation proceeds from a post-translocation (POST) complex to a pre-translocation (PRE) complex, thus giving elongation factor G a second chance to translocate the tRNAs correctly. Binds to ribosomes in a GTP-dependent manner. This Lactococcus lactis subsp. cremoris (strain SK11) protein is Elongation factor 4.